Consider the following 246-residue polypeptide: 2-C-methyl-D-erythritol 4-phosphate cytidylyltransferase (246 aa).

This sequence belongs to the IspD/TarI cytidylyltransferase family. IspD subfamily.

The catalysed reaction is 2-C-methyl-D-erythritol 4-phosphate + CTP + H(+) = 4-CDP-2-C-methyl-D-erythritol + diphosphate. The protein operates within isoprenoid biosynthesis; isopentenyl diphosphate biosynthesis via DXP pathway; isopentenyl diphosphate from 1-deoxy-D-xylulose 5-phosphate: step 2/6. In terms of biological role, catalyzes the formation of 4-diphosphocytidyl-2-C-methyl-D-erythritol from CTP and 2-C-methyl-D-erythritol 4-phosphate (MEP). The sequence is that of 2-C-methyl-D-erythritol 4-phosphate cytidylyltransferase from Clostridium tetani (strain Massachusetts / E88).